Reading from the N-terminus, the 555-residue chain is Glutamine--tRNA ligase (555 aa).

The 'HIGH' region signature appears at 34-44 (PEPNGYLHIGH). ATP-binding positions include 35 to 37 (EPN) and 41 to 47 (HIGHAKS). Residues Asp67 and Tyr212 each contribute to the L-glutamine site. ATP is bound by residues Thr231, 261–262 (RL), and 269–271 (MSK). The 'KMSKS' region signature appears at 268–272 (VMSKR). An interaction with tRNA region spans residues 317–324 (TKQDNTIE).

Belongs to the class-I aminoacyl-tRNA synthetase family. Monomer.

The protein resides in the cytoplasm. The catalysed reaction is tRNA(Gln) + L-glutamine + ATP = L-glutaminyl-tRNA(Gln) + AMP + diphosphate. The sequence is that of Glutamine--tRNA ligase from Citrobacter koseri (strain ATCC BAA-895 / CDC 4225-83 / SGSC4696).